Here is a 293-residue protein sequence, read N- to C-terminus: MPWIQLKLNTTGANAEDLSDALMEAGSVSITFQDTHDTPVFEPLPGETRLWGDTDVIGLFDAETDMKAVVAQLEQHPLLGAGFAHKIEQLEDKDWEREWMDNFHPMRFGERLWICPSWRDVPDENAVNVMLDPGLAFGTGTHPTTAMCLQWLDGLDLQGKTVIDFGCGSGILAIAALKLGAAKAIGIDIDPQAIQASRDNAQRNGVSERLELYLPQDQPEAMKADVVVANILAGPLRELAPLISVLPVTGGLLGLSGILASQAESVCEAYAPLFTLDPVVEKEEWCRITGRKN.

S-adenosyl-L-methionine contacts are provided by threonine 145, glycine 166, aspartate 188, and asparagine 230.

This sequence belongs to the methyltransferase superfamily. PrmA family.

Its subcellular location is the cytoplasm. The enzyme catalyses L-lysyl-[protein] + 3 S-adenosyl-L-methionine = N(6),N(6),N(6)-trimethyl-L-lysyl-[protein] + 3 S-adenosyl-L-homocysteine + 3 H(+). In terms of biological role, methylates ribosomal protein L11. In Klebsiella pneumoniae (strain 342), this protein is Ribosomal protein L11 methyltransferase.